Reading from the N-terminus, the 477-residue chain is Beta-agarase D (477 aa).

The first 20 residues, 1 to 20 (MKRSILLAIIAFLQFFTSYG), serve as a signal peptide directing secretion. Positions 22 to 378 (YDWDNVPIPA…WIRVYKPVNA (357 aa)) constitute a GH16 domain. Residues 94-104 (MQNHVAVSGGN), 123-125 (NNT), glutamate 174, glutamate 179, arginine 206, and glutamate 340 each bind substrate. Residue glutamate 174 is the Nucleophile of the active site. Residue glutamate 179 is the Proton donor of the active site. Residues 382-391 (NSAETTSTVE) show a composition bias toward low complexity. The tract at residues 382 to 402 (NSAETTSTVEKPASFEPQGQP) is disordered.

It belongs to the glycosyl hydrolase 16 family.

Its subcellular location is the secreted. It carries out the reaction Hydrolysis of (1-&gt;4)-beta-D-galactosidic linkages in agarose, giving the tetramer as the predominant product.. Functionally, cleaves the beta-1,4-linkages between beta-D-galactose and alpha-L-3,6-anhydro-galactose residues in agarose. Cleaves agarose in a random manner with retention of the anomeric-bond configuration, producing beta-anomers that give rise progressively to alpha-anomers when mutarotation takes place. Requires at least 4 consecutive agarose units and is highly intolerant to modifications. The sequence is that of Beta-agarase D (agaD) from Zobellia galactanivorans (strain DSM 12802 / CCUG 47099 / CIP 106680 / NCIMB 13871 / Dsij).